Here is a 726-residue protein sequence, read N- to C-terminus: Biotin--protein ligase (726 aa).

The tract at residues 28–98 (EVKDQVSNKQ…SDRGGGPVEH (71 aa)) is disordered. Positions 43 to 75 (PKPEPSLEIKPEQDGMEHVGRDDPKALGEEPKQ) are enriched in basic and acidic residues. A phosphoserine mark is found at S147 and S299. A BPL/LPL catalytic domain is found at 463–652 (KQLGKVILFA…VLEKLIKEFQ (190 aa)).

Belongs to the biotin--protein ligase family. In terms of assembly, monomer. Widely expressed. Mostly expressed in muscle, placenta and to a lower extent in the brain, kidney, pancreas, liver and lung.

The protein localises to the cytoplasm. It localises to the mitochondrion. The enzyme catalyses apo-[methylmalonyl-CoA:pyruvate carboxytransferase] + biotin + ATP = holo-[methylmalonyl-CoA:pyruvate carboxytransferase] + AMP + diphosphate + H(+). It catalyses the reaction apo-[propionyl-CoA:carbon-dioxide ligase (ADP-forming)] + biotin + ATP = holo-[propionyl-CoA:carbon-dioxide ligase (ADP-forming)] + AMP + diphosphate + H(+). The catalysed reaction is apo-[3-methylcrotonoyl-CoA:carbon-dioxide ligase (ADP-forming)] + biotin + ATP = holo-[3-methylcrotonoyl-CoA:carbon-dioxide ligase (ADP-forming)] + AMP + diphosphate + H(+). It carries out the reaction biotin + L-lysyl-[protein] + ATP = N(6)-biotinyl-L-lysyl-[protein] + AMP + diphosphate + H(+). Biotin--protein ligase catalyzing the biotinylation of the 4 biotin-dependent carboxylases acetyl-CoA-carboxylase, pyruvate carboxylase, propionyl-CoA carboxylase, and methylcrotonyl-CoA carboxylase. In Homo sapiens (Human), this protein is Biotin--protein ligase.